The sequence spans 275 residues: Phosphate import ATP-binding protein PstB (275 aa).

Positions 28–270 (IDCRDIRVFY…PREKRTEDYI (243 aa)) constitute an ABC transporter domain. 60–67 (GPSGCGKS) contributes to the ATP binding site.

It belongs to the ABC transporter superfamily. Phosphate importer (TC 3.A.1.7) family. As to quaternary structure, the complex is composed of two ATP-binding proteins (PstB), two transmembrane proteins (PstC and PstA) and a solute-binding protein (PstS).

The protein resides in the cell inner membrane. The enzyme catalyses phosphate(out) + ATP + H2O = ADP + 2 phosphate(in) + H(+). Its function is as follows. Part of the ABC transporter complex PstSACB involved in phosphate import. Responsible for energy coupling to the transport system. This chain is Phosphate import ATP-binding protein PstB, found in Hyphomonas neptunium (strain ATCC 15444).